Reading from the N-terminus, the 195-residue chain is Nucleoside triphosphate pyrophosphatase (195 aa).

Aspartate 70 functions as the Proton acceptor in the catalytic mechanism.

The protein belongs to the Maf family. A divalent metal cation serves as cofactor.

Its subcellular location is the cytoplasm. The catalysed reaction is a ribonucleoside 5'-triphosphate + H2O = a ribonucleoside 5'-phosphate + diphosphate + H(+). It catalyses the reaction a 2'-deoxyribonucleoside 5'-triphosphate + H2O = a 2'-deoxyribonucleoside 5'-phosphate + diphosphate + H(+). Its function is as follows. Nucleoside triphosphate pyrophosphatase. May have a dual role in cell division arrest and in preventing the incorporation of modified nucleotides into cellular nucleic acids. The sequence is that of Nucleoside triphosphate pyrophosphatase from Microcystis aeruginosa (strain NIES-843 / IAM M-2473).